Reading from the N-terminus, the 361-residue chain is Probable mannose-1-phosphate guanylyltransferase 3 (361 aa).

GDP-alpha-D-mannose contacts are provided by leucine 6 and valine 7. 5 residues coordinate diphosphate: glycine 9, glycine 11, threonine 12, arginine 13, and lysine 23. Residues glycine 85, asparagine 109, aspartate 111, glycine 146, and asparagine 173 each contribute to the GDP-alpha-D-mannose site.

Belongs to the transferase hexapeptide repeat family.

It catalyses the reaction alpha-D-mannose 1-phosphate + GTP + H(+) = GDP-alpha-D-mannose + diphosphate. Its pathway is nucleotide-sugar biosynthesis; GDP-alpha-D-mannose biosynthesis; GDP-alpha-D-mannose from alpha-D-mannose 1-phosphate (GTP route): step 1/1. Its function is as follows. Catalyzes a reaction of the Smirnoff-Wheeler pathway, the major route to ascorbate biosynthesis in plants. This is Probable mannose-1-phosphate guanylyltransferase 3 from Oryza sativa subsp. japonica (Rice).